The sequence spans 515 residues: Mucin-like protein Glc1.8b (515 aa).

The signal sequence occupies residues 1-20; it reads MSQITLIILVLAIGFSCTKS. Topologically, residues 21-467 are extracellular; it reads HPINSTRDGE…ANDIKKPAFP (447 aa). N-linked (GlcNAc...) asparagine; by host glycans are attached at residues asparagine 24, asparagine 45, asparagine 51, asparagine 60, asparagine 85, asparagine 93, asparagine 102, asparagine 123, asparagine 129, asparagine 138, asparagine 180, asparagine 201, asparagine 207, asparagine 216, asparagine 258, asparagine 279, asparagine 285, asparagine 294, asparagine 319, asparagine 327, asparagine 336, asparagine 357, asparagine 363, asparagine 372, asparagine 397, asparagine 405, asparagine 413, asparagine 434, and asparagine 441. Residues 80-114 form a disordered region; it reads SKKDENITGQSEINTSAKSQPINSTRDGEDSGTDL. Positions 86–104 are enriched in polar residues; sequence ITGQSEINTSAKSQPINST. Residues 314-358 form a disordered region; sequence SKKDENITGQSEINTSAKSQPINSTRDGEDSGTDLKNLLTDPANT. Positions 320–338 are enriched in polar residues; that stretch reads ITGQSEINTSAKSQPINST. The disordered stretch occupies residues 393–413; it reads RKDENVTGQSEFNISTNSNLN. A helical membrane pass occupies residues 468-488; the sequence is YCIILITFQIVTVGMIIYLVF. The Cytoplasmic portion of the chain corresponds to 489-515; the sequence is RTMRKPCQSERAIPLNSFGFGNNSSYE.

This sequence belongs to the polydnaviridae Glc1.8 protein family.

Its subcellular location is the host membrane. Involved in suppression of the insect cellular immune response. Inhibits host hemocyte adhesion and phagocytosis. The protein is Mucin-like protein Glc1.8b (O16) of Microplitis demolitor (Parasitoid wasp).